Here is a 258-residue protein sequence, read N- to C-terminus: Putative [LysW]-aminoadipate/[LysW]-glutamate kinase (258 aa).

Residues 33–34 (GG), Arg60, and Asn164 each bind substrate.

This sequence belongs to the acetylglutamate kinase family. LysZ subfamily.

The protein localises to the cytoplasm. The enzyme catalyses [amino-group carrier protein]-C-terminal-N-(1,4-dicarboxybutan-1-yl)-L-glutamine + ATP = [amino-group carrier protein]-C-terminal-N-(1-carboxy-5-phosphooxy-5-oxopentan-1-yl)-L-glutamine + ADP. It carries out the reaction [amino-group carrier protein]-C-terminal-gamma-(L-glutamyl)-L-glutamate + ATP = [amino-group carrier protein]-C-terminal-gamma-(5-phospho-L-glutamyl)-L-glutamate + ADP. It functions in the pathway amino-acid biosynthesis; L-lysine biosynthesis via AAA pathway; L-lysine from L-alpha-aminoadipate (Thermus route): step 2/5. The protein operates within amino-acid biosynthesis; L-arginine biosynthesis. In terms of biological role, involved in both the arginine and lysine biosynthetic pathways. Phosphorylates the LysW-bound precursors glutamate (for arginine biosynthesis), respectively alpha-aminoadipate (for lysine biosynthesis). This is Putative [LysW]-aminoadipate/[LysW]-glutamate kinase from Caldivirga maquilingensis (strain ATCC 700844 / DSM 13496 / JCM 10307 / IC-167).